Reading from the N-terminus, the 402-residue chain is Zinc finger CCHC domain-containing protein 12 (402 aa).

The disordered stretch occupies residues 308-341; that stretch reads IDSPHNSRAQFPSTSGGSGYKNNGPGEMRRARKR. Positions 311-322 are enriched in polar residues; it reads PHNSRAQFPSTS. The CCHC-type zinc-finger motif lies at 345 to 362; the sequence is IRCSYCGEEGHSKETCDN.

It belongs to the ZCCHC12 family. Interacts with SMAD1 and CREB-binding protein (CBP). Forms a protein-DNA complex through its association with SMAD1.

Functionally, transcriptional coactivator in the bone morphogenetic protein (BMP)-signaling pathway. It positively modulates BMP signaling by interacting with SMAD1 and associating with CBP in the transcription complex. It contributes to the BMP-induced enhancement of cholinergic-neuron-specific gene expression. The polypeptide is Zinc finger CCHC domain-containing protein 12 (ZCCHC12) (Homo sapiens (Human)).